A 497-amino-acid polypeptide reads, in one-letter code: Probable cytosol aminopeptidase (497 aa).

Positions 263 and 268 each coordinate Mn(2+). Lys275 is a catalytic residue. 3 residues coordinate Mn(2+): Asp286, Asp345, and Glu347. Residue Arg349 is part of the active site.

The protein belongs to the peptidase M17 family. It depends on Mn(2+) as a cofactor.

Its subcellular location is the cytoplasm. It catalyses the reaction Release of an N-terminal amino acid, Xaa-|-Yaa-, in which Xaa is preferably Leu, but may be other amino acids including Pro although not Arg or Lys, and Yaa may be Pro. Amino acid amides and methyl esters are also readily hydrolyzed, but rates on arylamides are exceedingly low.. The enzyme catalyses Release of an N-terminal amino acid, preferentially leucine, but not glutamic or aspartic acids.. Its function is as follows. Presumably involved in the processing and regular turnover of intracellular proteins. Catalyzes the removal of unsubstituted N-terminal amino acids from various peptides. The sequence is that of Probable cytosol aminopeptidase from Sinorhizobium medicae (strain WSM419) (Ensifer medicae).